Consider the following 406-residue polypeptide: ATPase ASNA1 homolog (406 aa).

21–28 (KGGVGKTT) provides a ligand contact to ATP. The active site involves aspartate 62. ATP is bound by residues glutamate 300 and asparagine 327. The Zn(2+) site is built by cysteine 339 and cysteine 342.

It belongs to the arsA ATPase family. In terms of assembly, homodimer.

The protein resides in the cytoplasm. It is found in the endoplasmic reticulum. Functionally, ATPase required for the post-translational delivery of tail-anchored (TA) proteins to the endoplasmic reticulum. Recognizes and selectively binds the transmembrane domain of TA proteins in the cytosol. This complex then targets to the endoplasmic reticulum by membrane-bound receptors, where the tail-anchored protein is released for insertion. This process is regulated by ATP binding and hydrolysis. ATP binding drives the homodimer towards the closed dimer state, facilitating recognition of newly synthesized TA membrane proteins. ATP hydrolysis is required for insertion. Subsequently, the homodimer reverts towards the open dimer state, lowering its affinity for the membrane-bound receptor, and returning it to the cytosol to initiate a new round of targeting. This is ATPase ASNA1 homolog from Leishmania braziliensis.